We begin with the raw amino-acid sequence, 432 residues long: Amino-acid acetyltransferase (432 aa).

The 140-residue stretch at 286-425 (ELVREAAIED…ASLYNFQRNS (140 aa)) folds into the N-acetyltransferase domain.

The protein belongs to the acetyltransferase family. ArgA subfamily.

The protein resides in the cytoplasm. It carries out the reaction L-glutamate + acetyl-CoA = N-acetyl-L-glutamate + CoA + H(+). It functions in the pathway amino-acid biosynthesis; L-arginine biosynthesis; N(2)-acetyl-L-ornithine from L-glutamate: step 1/4. This is Amino-acid acetyltransferase from Pseudomonas syringae pv. tomato (strain ATCC BAA-871 / DC3000).